Reading from the N-terminus, the 313-residue chain is Ribosomal RNA small subunit methyltransferase H (313 aa).

S-adenosyl-L-methionine is bound by residues 35–37 (GGH), aspartate 55, phenylalanine 79, aspartate 100, and glutamine 107.

It belongs to the methyltransferase superfamily. RsmH family.

It is found in the cytoplasm. It carries out the reaction cytidine(1402) in 16S rRNA + S-adenosyl-L-methionine = N(4)-methylcytidine(1402) in 16S rRNA + S-adenosyl-L-homocysteine + H(+). Its function is as follows. Specifically methylates the N4 position of cytidine in position 1402 (C1402) of 16S rRNA. The sequence is that of Ribosomal RNA small subunit methyltransferase H from Burkholderia ambifaria (strain ATCC BAA-244 / DSM 16087 / CCUG 44356 / LMG 19182 / AMMD) (Burkholderia cepacia (strain AMMD)).